The following is a 68-amino-acid chain: Large ribosomal subunit protein bL31 (68 aa).

4 residues coordinate Zn(2+): Cys17, Cys19, Cys37, and Cys40.

It belongs to the bacterial ribosomal protein bL31 family. Type A subfamily. In terms of assembly, part of the 50S ribosomal subunit. Zn(2+) is required as a cofactor.

In terms of biological role, binds the 23S rRNA. The polypeptide is Large ribosomal subunit protein bL31 (Clostridium perfringens (strain ATCC 13124 / DSM 756 / JCM 1290 / NCIMB 6125 / NCTC 8237 / Type A)).